The chain runs to 213 residues: Deoxyribose-phosphate aldolase (213 aa).

Asp89 (proton donor/acceptor) is an active-site residue. Lys151 functions as the Schiff-base intermediate with acetaldehyde in the catalytic mechanism. Lys180 functions as the Proton donor/acceptor in the catalytic mechanism.

Belongs to the DeoC/FbaB aldolase family. DeoC type 1 subfamily.

The protein localises to the cytoplasm. The enzyme catalyses 2-deoxy-D-ribose 5-phosphate = D-glyceraldehyde 3-phosphate + acetaldehyde. Its pathway is carbohydrate degradation; 2-deoxy-D-ribose 1-phosphate degradation; D-glyceraldehyde 3-phosphate and acetaldehyde from 2-deoxy-alpha-D-ribose 1-phosphate: step 2/2. Its function is as follows. Catalyzes a reversible aldol reaction between acetaldehyde and D-glyceraldehyde 3-phosphate to generate 2-deoxy-D-ribose 5-phosphate. This chain is Deoxyribose-phosphate aldolase, found in Finegoldia magna (strain ATCC 29328 / DSM 20472 / WAL 2508) (Peptostreptococcus magnus).